The following is a 100-amino-acid chain: Small ribosomal subunit protein uS14c (100 aa).

Belongs to the universal ribosomal protein uS14 family. Part of the 30S ribosomal subunit.

Its subcellular location is the plastid. The protein resides in the chloroplast. Its function is as follows. Binds 16S rRNA, required for the assembly of 30S particles. The chain is Small ribosomal subunit protein uS14c from Vitis vinifera (Grape).